Here is a 151-residue protein sequence, read N- to C-terminus: Protein-export protein SecB (151 aa).

The protein belongs to the SecB family. As to quaternary structure, homotetramer, a dimer of dimers. One homotetramer interacts with 1 SecA dimer.

Its subcellular location is the cytoplasm. Functionally, one of the proteins required for the normal export of preproteins out of the cell cytoplasm. It is a molecular chaperone that binds to a subset of precursor proteins, maintaining them in a translocation-competent state. It also specifically binds to its receptor SecA. The polypeptide is Protein-export protein SecB (Acinetobacter baylyi (strain ATCC 33305 / BD413 / ADP1)).